The primary structure comprises 1193 residues: DNA-directed RNA polymerase subunit beta (1193 aa).

Residues 1153-1162 (EMRDLEDDED) show a composition bias toward acidic residues. The tract at residues 1153–1193 (EMRDLEDDEDAKQNEGLSLPNDEESEELVSADAERDVVTKE) is disordered. Over residues 1184–1193 (DAERDVVTKE) the composition is skewed to basic and acidic residues.

This sequence belongs to the RNA polymerase beta chain family. In terms of assembly, the RNAP catalytic core consists of 2 alpha, 1 beta, 1 beta' and 1 omega subunit. When a sigma factor is associated with the core the holoenzyme is formed, which can initiate transcription.

It catalyses the reaction RNA(n) + a ribonucleoside 5'-triphosphate = RNA(n+1) + diphosphate. DNA-dependent RNA polymerase catalyzes the transcription of DNA into RNA using the four ribonucleoside triphosphates as substrates. The polypeptide is DNA-directed RNA polymerase subunit beta (Bacillus licheniformis (strain ATCC 14580 / DSM 13 / JCM 2505 / CCUG 7422 / NBRC 12200 / NCIMB 9375 / NCTC 10341 / NRRL NRS-1264 / Gibson 46)).